The primary structure comprises 484 residues: Suppressor of fused homolog (484 aa).

Residues 1 to 24 (MAELRPSGAPGPTAPPAPGPTAPP) are disordered. Over residues 12 to 23 (PTAPPAPGPTAP) the composition is skewed to pro residues. K257 is covalently cross-linked (Glycyl lysine isopeptide (Lys-Gly) (interchain with G-Cter in ubiquitin)). Positions 279 to 360 (SRPPEDDEDS…SSTAIIPHEL (82 aa)) are disordered. S301 carries the post-translational modification Phosphoserine. Position 303 is an N6-acetyllysine (K303). A Glycyl lysine isopeptide (Lys-Gly) (interchain with G-Cter in SUMO2) cross-link involves residue K321. Positions 336-347 (AHDRAPSRKDSL) are enriched in basic and acidic residues. Residues S342, S346, and S352 each carry the phosphoserine modification. T353 bears the Phosphothreonine mark. S481 carries the post-translational modification Phosphoserine.

It belongs to the SUFU family. May form homodimers. Part of a DNA-bound corepressor complex containing SAP18, GLI1 and SIN3. Part of a complex containing CTNNB1. Binds BTRC, GLI2, GLI3, SAP18 and STK36. Binds both free and DNA-bound GLI1. Interacts with KIF7. Interacts with GLI3FL and this interaction regulates the formation of either repressor or activator forms of GLI3. Its association with GLI3FL is regulated by Hh signaling and dissociation of the SUFU-GLI3 interaction requires the presence of the ciliary motor KIF3A. Interacts with ULK3; inactivating the protein kinase activity of ULK3. Interacts with RAB23. Post-translationally, polyubiquitinated at Lys-257 by the SCF(FBXL17) complex, leading to its subsequent degradation and allowing the release of GLI1 for proper hedgehog/smoothened signal transduction. Ubiquitination is impaired by phosphorylation at Ser-342, Ser-346, Ser-352 and Thr-353. In terms of processing, phosphorylation at Ser-342, Ser-346, Ser-352 and Thr-353 prevents ubiquitination by the SCF(FBXL17) complex. In terms of tissue distribution, ubiquitous in adult tissues. Detected in osteoblasts of the perichondrium in the developing limb of 12-week old embryos. Isoform 1 is detected in fetal brain, lung, kidney and testis. Isoform 2 is detected in fetal testis, and at much lower levels in fetal brain, lung and kidney.

The protein resides in the cytoplasm. It localises to the nucleus. Functionally, negative regulator in the hedgehog/smoothened signaling pathway. Down-regulates GLI1-mediated transactivation of target genes. Down-regulates GLI2-mediated transactivation of target genes. Part of a corepressor complex that acts on DNA-bound GLI1. May also act by linking GLI1 to BTRC and thereby targeting GLI1 to degradation by the proteasome. Sequesters GLI1, GLI2 and GLI3 in the cytoplasm, this effect is overcome by binding of STK36 to both SUFU and a GLI protein. Negative regulator of beta-catenin signaling. Regulates the formation of either the repressor form (GLI3R) or the activator form (GLI3A) of the full-length form of GLI3 (GLI3FL). GLI3FL is complexed with SUFU in the cytoplasm and is maintained in a neutral state. Without the Hh signal, the SUFU-GLI3 complex is recruited to cilia, leading to the efficient processing of GLI3FL into GLI3R. When Hh signaling is initiated, SUFU dissociates from GLI3FL and the latter translocates to the nucleus, where it is phosphorylated, destabilized, and converted to a transcriptional activator (GLI3A). Required for normal embryonic development. Required for the proper formation of hair follicles and the control of epidermal differentiation. In Homo sapiens (Human), this protein is Suppressor of fused homolog.